Reading from the N-terminus, the 213-residue chain is MQTYQKDFIDFVIGCEVLRFGEFTLKSGRQSPYFFNAGLFNTGARLGRLGEFYAQTLTSGGIRADVLYGPAYKGIPLVAATAIALARVSGEEIPYAFNRKEAKDHGEGGTLVGAPLQGEVLIVDDVITAGTSVRESIEIIRGAGARPCGVLIALDREEIGQSGKSAVEEVQDSLGIPVHAIVGFRHLIDYLRGSGRVRELAALEDYRSRYGTA.

Position 26 (Lys-26) interacts with 5-phospho-alpha-D-ribose 1-diphosphate. An orotate-binding site is contributed by 34 to 35 (FF). Residues 72–73 (YK), Arg-99, Lys-100, Lys-103, His-105, and 124–132 (DDVITAGTS) contribute to the 5-phospho-alpha-D-ribose 1-diphosphate site. Positions 128 and 156 each coordinate orotate.

This sequence belongs to the purine/pyrimidine phosphoribosyltransferase family. PyrE subfamily. In terms of assembly, homodimer. Mg(2+) serves as cofactor.

The enzyme catalyses orotidine 5'-phosphate + diphosphate = orotate + 5-phospho-alpha-D-ribose 1-diphosphate. It functions in the pathway pyrimidine metabolism; UMP biosynthesis via de novo pathway; UMP from orotate: step 1/2. Its function is as follows. Catalyzes the transfer of a ribosyl phosphate group from 5-phosphoribose 1-diphosphate to orotate, leading to the formation of orotidine monophosphate (OMP). The protein is Orotate phosphoribosyltransferase of Methylococcus capsulatus (strain ATCC 33009 / NCIMB 11132 / Bath).